The sequence spans 255 residues: Protein DOG1-like 2 (255 aa).

One can recognise a DOG1 domain in the interval Glu10–Val246.

The chain is Protein DOG1-like 2 from Arabidopsis thaliana (Mouse-ear cress).